Consider the following 258-residue polypeptide: tRNA pseudouridine synthase A (258 aa).

Aspartate 53 acts as the Nucleophile in catalysis. Tyrosine 111 contacts substrate.

The protein belongs to the tRNA pseudouridine synthase TruA family. Homodimer.

It carries out the reaction uridine(38/39/40) in tRNA = pseudouridine(38/39/40) in tRNA. Its function is as follows. Formation of pseudouridine at positions 38, 39 and 40 in the anticodon stem and loop of transfer RNAs. The protein is tRNA pseudouridine synthase A of Streptococcus agalactiae serotype III (strain NEM316).